We begin with the raw amino-acid sequence, 336 residues long: Glycerol-3-phosphate dehydrogenase [NAD(P)+] (336 aa).

Residues serine 16, tyrosine 17, histidine 37, and lysine 111 each coordinate NADPH. Residues lysine 111, glycine 140, and threonine 142 each coordinate sn-glycerol 3-phosphate. NADPH is bound at residue alanine 144. The sn-glycerol 3-phosphate site is built by lysine 196, aspartate 249, serine 259, arginine 260, and asparagine 261. Lysine 196 serves as the catalytic Proton acceptor. Residue arginine 260 participates in NADPH binding. NADPH is bound by residues valine 284 and glutamate 286.

This sequence belongs to the NAD-dependent glycerol-3-phosphate dehydrogenase family.

It is found in the cytoplasm. It catalyses the reaction sn-glycerol 3-phosphate + NAD(+) = dihydroxyacetone phosphate + NADH + H(+). The catalysed reaction is sn-glycerol 3-phosphate + NADP(+) = dihydroxyacetone phosphate + NADPH + H(+). The protein operates within membrane lipid metabolism; glycerophospholipid metabolism. Functionally, catalyzes the reduction of the glycolytic intermediate dihydroxyacetone phosphate (DHAP) to sn-glycerol 3-phosphate (G3P), the key precursor for phospholipid synthesis. This chain is Glycerol-3-phosphate dehydrogenase [NAD(P)+], found in Actinobacillus pleuropneumoniae serotype 5b (strain L20).